The following is a 225-amino-acid chain: Heptaprenylglyceryl phosphate synthase (225 aa).

Lysine 6 provides a ligand contact to sn-glycerol 1-phosphate. Residues aspartate 8 and threonine 34 each contribute to the Mg(2+) site. Sn-glycerol 1-phosphate contacts are provided by residues 153 to 158 (YIEYSG), glycine 183, and 203 to 204 (GN).

The protein belongs to the GGGP/HepGP synthase family. Group I subfamily. Homodimer. Mg(2+) is required as a cofactor.

The enzyme catalyses sn-glycerol 1-phosphate + all-trans-heptaprenyl diphosphate = 3-heptaprenyl-sn-glycero-1-phosphate + diphosphate. Its pathway is membrane lipid metabolism; glycerophospholipid metabolism. Its function is as follows. Prenyltransferase that catalyzes in vivo the transfer of the heptaprenyl moiety of heptaprenyl pyrophosphate (HepPP; 35 carbon atoms) to the C3 hydroxyl of sn-glycerol-1-phosphate (G1P), producing heptaprenylglyceryl phosphate (HepGP). This reaction is an ether-bond-formation step in the biosynthesis of archaea-type G1P-based membrane lipids found in Bacillales. The polypeptide is Heptaprenylglyceryl phosphate synthase (Listeria welshimeri serovar 6b (strain ATCC 35897 / DSM 20650 / CCUG 15529 / CIP 8149 / NCTC 11857 / SLCC 5334 / V8)).